Here is a 135-residue protein sequence, read N- to C-terminus: S-adenosylmethionine decarboxylase proenzyme (135 aa).

The active-site Schiff-base intermediate with substrate; via pyruvic acid is the Ser63. At Ser63 the chain carries Pyruvic acid (Ser); by autocatalysis. His68 functions as the Proton acceptor; for processing activity in the catalytic mechanism. Residue Cys83 is the Proton donor; for catalytic activity of the active site.

It belongs to the prokaryotic AdoMetDC family. Type 1 subfamily. In terms of assembly, heterotetramer of two alpha and two beta chains arranged as a dimer of alpha/beta heterodimers. Pyruvate serves as cofactor. Is synthesized initially as an inactive proenzyme. Formation of the active enzyme involves a self-maturation process in which the active site pyruvoyl group is generated from an internal serine residue via an autocatalytic post-translational modification. Two non-identical subunits are generated from the proenzyme in this reaction, and the pyruvate is formed at the N-terminus of the alpha chain, which is derived from the carboxyl end of the proenzyme. The post-translation cleavage follows an unusual pathway, termed non-hydrolytic serinolysis, in which the side chain hydroxyl group of the serine supplies its oxygen atom to form the C-terminus of the beta chain, while the remainder of the serine residue undergoes an oxidative deamination to produce ammonia and the pyruvoyl group blocking the N-terminus of the alpha chain.

The catalysed reaction is S-adenosyl-L-methionine + H(+) = S-adenosyl 3-(methylsulfanyl)propylamine + CO2. It participates in amine and polyamine biosynthesis; S-adenosylmethioninamine biosynthesis; S-adenosylmethioninamine from S-adenosyl-L-methionine: step 1/1. In terms of biological role, catalyzes the decarboxylation of S-adenosylmethionine to S-adenosylmethioninamine (dcAdoMet), the propylamine donor required for the synthesis of the polyamines spermine and spermidine from the diamine putrescine. The polypeptide is S-adenosylmethionine decarboxylase proenzyme (Thermodesulfovibrio yellowstonii (strain ATCC 51303 / DSM 11347 / YP87)).